The sequence spans 96 residues: Large ribosomal subunit protein eL21 (96 aa).

Residues 1 to 37 (MPSSNGPMTGTRDKLSNSPRERGMSPPQRAIQEYDEG) form a disordered region. Basic and acidic residues predominate over residues 11 to 23 (TRDKLSNSPRERG).

It belongs to the eukaryotic ribosomal protein eL21 family.

The protein is Large ribosomal subunit protein eL21 of Haloquadratum walsbyi (strain DSM 16790 / HBSQ001).